A 279-amino-acid chain; its full sequence is Vomeronasal type-1 receptor A8 (279 aa).

Residues 1–19 (MNKDHTLYCSVYIRNAFFS) lie on the Extracellular side of the membrane. A helical membrane pass occupies residues 20–40 (EIGIGISANSCLLLFHTFMFI). Over 41–49 (RGHRPRLTD) the chain is Cytoplasmic. Residues 50-70 (LPIGFVALIHLVMLLLAAYIT) traverse the membrane as a helical segment. The Extracellular portion of the chain corresponds to 71–93 (EDFFMSSGGWDDITCKLVIFLHR). Cysteine 85 and cysteine 172 are joined by a disulfide. A helical membrane pass occupies residues 94–114 (FFRSLSVCATCLLSVFQAIIL). Over 115-134 (CPQSSHLAKLKQNSPHQLSY) the chain is Cytoplasmic. The chain crosses the membrane as a helical span at residues 135–155 (FFIFLSIFYTSISSQILIAAI). Topologically, residues 156-159 (PTQN) are extracellular. Asparagine 159 is a glycosylation site (N-linked (GlcNAc...) asparagine). A helical transmembrane segment spans residues 160–180 (ITFVNLIYITNSCSFLPLSSS). Residues 181–187 (MQHTFST) are Cytoplasmic-facing. The helical transmembrane segment at 188–208 (LLTFRNVFVIGLMGLSTCYMA) threads the bilayer. Over 209 to 238 (TLLCRHKTRSQRLQNSKLSPKATPEQRALR) the chain is Extracellular. A helical transmembrane segment spans residues 239–259 (TILMLMSFFLLMSTFDSIISY). The Cytoplasmic portion of the chain corresponds to 260–279 (SRTIITGKSTALLCPDSCRS).

It belongs to the G-protein coupled receptor 1 family. Expressed in a subset of sensory neurons located in the apical layer of the vomeronasal organ.

It localises to the cell membrane. Putative pheromone receptor implicated in the regulation of social and reproductive behavior. The chain is Vomeronasal type-1 receptor A8 from Mus musculus (Mouse).